We begin with the raw amino-acid sequence, 301 residues long: Phosducin-like protein (301 aa).

Thr2 bears the N-acetylthreonine mark. The segment at 15–60 (YYYSTSEDEDSDHEDKDRGRGAPASSSTPAEAELAGEGISVNTGPK) is disordered. Ser20 and Ser25 each carry phosphoserine. The segment covering 36-49 (APASSSTPAEAELA) has biased composition (low complexity). The region spanning 36-299 (APASSSTPAE…TCHSEDSDLE (264 aa)) is the Phosducin domain. The segment at 158 to 301 (FKQVLEIPSG…HSEDSDLEID (144 aa)) is thioredoxin fold. Residues Ser226, Ser293, and Ser296 each carry the phosphoserine modification.

It belongs to the phosducin family. As to quaternary structure, interacts with the CCT chaperonin complex. Forms a complex with the beta and gamma subunits of the GTP-binding protein, transducin.

It is found in the cell projection. The protein resides in the cilium. Its function is as follows. Functions as a co-chaperone for CCT in the assembly of heterotrimeric G protein complexes, facilitates the assembly of both Gbeta-Ggamma and RGS-Gbeta5 heterodimers. Also acts as a positive regulator of hedgehog signaling and regulates ciliary function. This chain is Phosducin-like protein (Pdcl), found in Rattus norvegicus (Rat).